A 450-amino-acid chain; its full sequence is Ribosomal protein uS12 methylthiotransferase RimO (450 aa).

One can recognise an MTTase N-terminal domain in the interval 9-124; it reads NRINVVTLGC…LLSALEADYK (116 aa). [4Fe-4S] cluster-binding residues include Cys-18, Cys-53, Cys-87, Cys-148, Cys-152, and Cys-155. Residues 134–365 enclose the Radical SAM core domain; it reads TTPKNYAYLK…EIQSQISWEL (232 aa). The TRAM domain occupies 367 to 434; that stretch reads QQKIGEVFNV…DFDLYGEPLN (68 aa).

This sequence belongs to the methylthiotransferase family. RimO subfamily. The cofactor is [4Fe-4S] cluster.

Its subcellular location is the cytoplasm. It catalyses the reaction L-aspartate(89)-[ribosomal protein uS12]-hydrogen + (sulfur carrier)-SH + AH2 + 2 S-adenosyl-L-methionine = 3-methylsulfanyl-L-aspartate(89)-[ribosomal protein uS12]-hydrogen + (sulfur carrier)-H + 5'-deoxyadenosine + L-methionine + A + S-adenosyl-L-homocysteine + 2 H(+). Catalyzes the methylthiolation of an aspartic acid residue of ribosomal protein uS12. In Christiangramia forsetii (strain DSM 17595 / CGMCC 1.15422 / KT0803) (Gramella forsetii), this protein is Ribosomal protein uS12 methylthiotransferase RimO.